The sequence spans 307 residues: Pyridoxal 5'-phosphate synthase subunit PdxS (307 aa).

Aspartate 37 lines the D-ribose 5-phosphate pocket. Lysine 94 (schiff-base intermediate with D-ribose 5-phosphate) is an active-site residue. Residue glycine 166 coordinates D-ribose 5-phosphate. Arginine 178 contributes to the D-glyceraldehyde 3-phosphate binding site. Residues glycine 227 and 248–249 (GS) contribute to the D-ribose 5-phosphate site.

This sequence belongs to the PdxS/SNZ family. In the presence of PdxT, forms a dodecamer of heterodimers.

It catalyses the reaction aldehydo-D-ribose 5-phosphate + D-glyceraldehyde 3-phosphate + L-glutamine = pyridoxal 5'-phosphate + L-glutamate + phosphate + 3 H2O + H(+). It participates in cofactor biosynthesis; pyridoxal 5'-phosphate biosynthesis. Functionally, catalyzes the formation of pyridoxal 5'-phosphate from ribose 5-phosphate (RBP), glyceraldehyde 3-phosphate (G3P) and ammonia. The ammonia is provided by the PdxT subunit. Can also use ribulose 5-phosphate and dihydroxyacetone phosphate as substrates, resulting from enzyme-catalyzed isomerization of RBP and G3P, respectively. This is Pyridoxal 5'-phosphate synthase subunit PdxS from Mycobacterium leprae (strain Br4923).